A 278-amino-acid polypeptide reads, in one-letter code: Expansin-B17 (278 aa).

Residues 1 to 26 form the signal peptide; the sequence is MAAASSRSFSLCVLLLLLLLAPPISA. One can recognise an Expansin-like EG45 domain in the interval 66 to 176; that stretch reads GGACGYGSLV…RRTACKYGGK (111 aa). 3 disulfide bridges follow: cysteine 69/cysteine 98, cysteine 101/cysteine 171, and cysteine 106/cysteine 112. One can recognise an Expansin-like CBD domain in the interval 189 to 270; the sequence is FWLSLLVEFE…NWKPTATYTS (82 aa).

This sequence belongs to the expansin family. Expansin B subfamily.

It localises to the secreted. The protein resides in the cell wall. Its subcellular location is the membrane. Functionally, may cause loosening and extension of plant cell walls by disrupting non-covalent bonding between cellulose microfibrils and matrix glucans. No enzymatic activity has been found. May be required for rapid internodal elongation in deepwater rice during submergence. This Oryza sativa subsp. japonica (Rice) protein is Expansin-B17 (EXPB17).